A 1908-amino-acid chain; its full sequence is Putative ankyrin repeat protein L484 (1908 aa).

ANK repeat units follow at residues 20-50 (DIMEQFFLTIKTGDIDKIRNFVAQNKNKFNI), 60-97 (PNKTPIHAVLELDDRIADQETKLTIIKYLDKMGAPMDL), 101-130 (DNVWPIHLAAADQDEDIIDYMLKNKVSIDR), 134-167 (SNNTPLHYAVYGKQVPCFDKVKVGSIVPPQDIDK), and 1370-1399 (DGNTPLHLAISMTNPDIVEILLKHGANPFT). The stretch at 1539–1603 (VQLLNPKLRD…QTNISDLEFK (65 aa)) forms a coiled coil.

It localises to the virion. This chain is Putative ankyrin repeat protein L484, found in Acanthamoeba polyphaga mimivirus (APMV).